A 325-amino-acid chain; its full sequence is Zinc metalloproteinase/disintegrin (325 aa).

The propeptide occupies 1-39 (KYENVEKGDEAPKKCGVTHTNLESDEPIEKASQLFGTSE). Glutamine 40 carries the pyrrolidone carboxylic acid modification. The 197-residue stretch at 46–242 (RHIELVIVAD…HNPQRILNEP (197 aa)) folds into the Peptidase M12B domain. Histidine 182 is a binding site for Zn(2+). The active site involves glutamate 183. Zn(2+) contacts are provided by histidine 186 and histidine 192. Cystine bridges form between cysteine 197–cysteine 221 and cysteine 199–cysteine 204. A propeptide spanning residues 243–257 (LRTDTVSTPVYGNVL) is cleaved from the precursor. The region spanning 250-322 (TPVYGNVLQN…SECESNPWNF (73 aa)) is the Disintegrin domain. Glutamine 258 carries the pyrrolidone carboxylic acid modification. Cystine bridges form between cysteine 264-cysteine 287, cysteine 278-cysteine 284, cysteine 283-cysteine 308, and cysteine 296-cysteine 315. The Cell attachment site signature appears at 300 to 302 (RGD).

The protein belongs to the venom metalloproteinase (M12B) family. P-II subfamily. P-IIe sub-subfamily. Heterodimer of bitisgabonin and gabonin-1 (bitisgabonin-1) or gabonin-2 (bitisgabonin-2); disulfide-linked. Requires Zn(2+) as cofactor. As to expression, expressed by the venom gland.

The protein localises to the secreted. In terms of biological role, impairs hemostasis in the envenomed animal. Functionally, in dimer with gabonin-1 (bitisgabonin-1), is a potent inhibitor of the adhesion of the RGD-dependent integrin alpha-5/beta-1 (ITGA5/ITGB1) to immobilized fibronectin. In dimer with gabonin-2 (bitisgabonin-2), preferentially inhibits the adhesion of the alpha-4/beta-1 (ITGA4/ITGB1) and alpha-9/beta-1 (ITGA9/ITGB1) integrins to VCAM-1 and also acts as a strong antagonist of alpha-5/beta-1 (ITGA5/ITGB1). The chain is Zinc metalloproteinase/disintegrin from Bitis gabonica (Gaboon adder).